The primary structure comprises 284 residues: 2-dehydro-3-deoxyphosphooctonate aldolase (284 aa).

It belongs to the KdsA family.

It localises to the cytoplasm. It carries out the reaction D-arabinose 5-phosphate + phosphoenolpyruvate + H2O = 3-deoxy-alpha-D-manno-2-octulosonate-8-phosphate + phosphate. Its pathway is carbohydrate biosynthesis; 3-deoxy-D-manno-octulosonate biosynthesis; 3-deoxy-D-manno-octulosonate from D-ribulose 5-phosphate: step 2/3. It participates in bacterial outer membrane biogenesis; lipopolysaccharide biosynthesis. In Edwardsiella ictaluri (strain 93-146), this protein is 2-dehydro-3-deoxyphosphooctonate aldolase.